A 284-amino-acid polypeptide reads, in one-letter code: Four and a half LIM domains protein 5 (284 aa).

A C4-type zinc finger spans residues 8–32 (CQYCTSSLIGKKYVLKDDNLYCISC). 3 consecutive LIM zinc-binding domains span residues 39–100 (NYCE…ECSS), 101–160 (KCFH…KEFA), and 161–220 (HYCN…LYAK).

In terms of assembly, interacts with CREM (via the third LIM domain). Interacts (via second LIM domain) with SPAG8. Testis-specific, temporal expression is coordinated with CREM.

The protein resides in the nucleus. May be involved in the regulation of spermatogenesis. Stimulates CREM transcriptional activity in a phosphorylation-independent manner. The sequence is that of Four and a half LIM domains protein 5 (Fhl5) from Mus musculus (Mouse).